We begin with the raw amino-acid sequence, 570 residues long: Molecular chaperone MKKS (570 aa).

Residue 192 to 199 (ERMVLGKS) participates in ATP binding. A substrate-binding apical domain region spans residues 198-370 (KSIIVPLKGQ…FHLLPNEATV (173 aa)).

The protein belongs to the TCP-1 chaperonin family. As to quaternary structure, component of a complex composed at least of MKKS, BBS10, BBS12, TCP1, CCT2, CCT3, CCT4, CCT5 and CCT8. Interacts with STUB1. Interacts with BBS2 (via coiled coil domain). Interacts with CCDC28B. Interacts with BBS12. Interacts with SMARCC1, a component of the SWI/SNF complexes; the interaction takes place predominantly in the cytoplasm and may modulate SMARCC1 location. Interacts with DLEC1. Widely expressed in adult and fetal tissues. Expressed in the developing heart, brain retina, limb buds, as well as in the developing neural tube. Expressed in the embryo in the first and second branchial arches. Expressed in parafin embedded tissue sections of brain, kidney, retina, olfactory epithelium and the ependymal layer of ventricles. Detected only in restricted regions of these tissue sections, including the ciliated border of renal tubules, the connecting cilium and the inner and outer nuclear layers of retina, and the ciliated layer of olfactory epithelia.

The protein resides in the cytoplasm. Its subcellular location is the cytoskeleton. It is found in the microtubule organizing center. It localises to the centrosome. The protein localises to the cytosol. The protein resides in the nucleus. In terms of biological role, probable molecular chaperone that assists the folding of proteins upon ATP hydrolysis. Plays a role in the assembly of BBSome, a complex involved in ciliogenesis regulating transports vesicles to the cilia. May play a role in protein processing in limb, cardiac and reproductive system development. May play a role in cytokinesis. The chain is Molecular chaperone MKKS (Mkks) from Mus musculus (Mouse).